A 440-amino-acid chain; its full sequence is Putative F-box/LRR-repeat protein At5g15620 (440 aa).

Residues 1-52 (MDRFSNLPDDVIYHIVSFLSAKEATCLKFVSKNFQNLVTIKRNVVFHHWESF) form the F-box domain. 7 LRR repeats span residues 4-31 (FSNLPDDVIYHIVSFLSAKEATCLKFVS), 126-153 (LKLGCGFVIDILPKNALLPALKTLILDS), 156-181 (FYASDGCAFTRLLSASPVLEELVIDR), 194-205 (SSPTLKRLTLRR), 210-235 (PEPETWTDFESVSFDTPSLAYLKYKD), 264-289 (YWLNRSADPSNLIRGLKNVEILSIKV), and 318-343 (EADFCWDPLQILLEKSPNLKTLTIEG).

This Arabidopsis thaliana (Mouse-ear cress) protein is Putative F-box/LRR-repeat protein At5g15620.